Reading from the N-terminus, the 68-residue chain is Copper transport protein ATOX1 (68 aa).

In terms of domain architecture, HMA spans 1-63; that stretch reads MPKHEFSVDM…TLKKTGKTVS (63 aa). Cu cation is bound by residues cysteine 12 and cysteine 15. Serine 47 is modified (phosphoserine). Position 60 is an N6-acetyllysine (lysine 60).

This sequence belongs to the ATX1 family. Homodimer. Interacts with ATP7B. Interacts with ATP7A. Interacts (via dimer form) with SLC31A1 (via C-terminal domain); this interaction improves ATOX1 stability and controls intracellular Cu(I) levels. As to expression, ubiquitous.

Its function is as follows. Binds and deliver cytosolic copper to the copper ATPase proteins. May be important in cellular antioxidant defense. The chain is Copper transport protein ATOX1 from Homo sapiens (Human).